The primary structure comprises 38 residues: Large ribosomal subunit protein bL36A (38 aa).

This sequence belongs to the bacterial ribosomal protein bL36 family.

The chain is Large ribosomal subunit protein bL36A from Enterobacter sp. (strain 638).